The following is a 643-amino-acid chain: NAD-dependent malic enzyme, mitochondrial (643 aa).

A mitochondrion-targeting transit peptide spans 1–38; that stretch reads PRVRSFIAHQSGITSVIRRSPDIAHRMVRSLSVSSQRN. Residues Gln-116, Arg-119, and Arg-143 each contribute to the fumarate site. The Proton donor role is filled by Tyr-164. Arg-219 contributes to the (S)-malate binding site. An NAD(+)-binding site is contributed by Arg-219. Lys-237 (proton acceptor) is an active-site residue. The a divalent metal cation site is built by Glu-309 and Asp-310. Asn-313, Asp-333, Ala-366, Ala-369, and Asn-472 together coordinate NAD(+). Asp-333 contacts a divalent metal cation. 2 residues coordinate (S)-malate: Asn-472 and Asn-516.

Belongs to the malic enzymes family. As to quaternary structure, homotetramer. The cofactor is Mg(2+). It depends on Mn(2+) as a cofactor.

Its subcellular location is the mitochondrion matrix. The catalysed reaction is (S)-malate + NAD(+) = pyruvate + CO2 + NADH. The enzyme catalyses oxaloacetate + H(+) = pyruvate + CO2. Subject to allosteric activation by fumarate. In terms of biological role, NAD-dependent mitochondrial malic enzyme that catalyzes the oxidative decarboxylation of malate to pyruvate. This Ascaris suum (Pig roundworm) protein is NAD-dependent malic enzyme, mitochondrial.